A 342-amino-acid chain; its full sequence is Galactose mutarotase (342 aa).

Position 14 is a phosphoserine (Ser14). Beta-D-galactose-binding positions include 81-82 and His107; that span reads NR. Phosphoserine is present on Ser124. The active-site Proton donor is His176. Beta-D-galactose is bound by residues 176–178, Asp243, Gln279, and Glu307; that span reads HSY. The Proton acceptor role is filled by Glu307.

This sequence belongs to the aldose epimerase family. In terms of assembly, monomer.

The protein localises to the cytoplasm. The catalysed reaction is alpha-D-galactose = beta-D-galactose. The enzyme catalyses alpha-D-glucose = beta-D-glucose. It participates in carbohydrate metabolism; hexose metabolism. It functions in the pathway carbohydrate metabolism; galactose metabolism. Its function is as follows. Mutarotase that catalyzes the interconversion of beta-D-galactose and alpha-D-galactose during galactose metabolism. Beta-D-galactose is metabolized in the liver into glucose 1-phosphate, the primary metabolic fuel, by the action of four enzymes that constitute the Leloir pathway: GALM, GALK1 (galactokinase), GALT (galactose-1-phosphate uridylyltransferase) and GALE (UDP-galactose-4'-epimerase). Involved in the maintenance of the equilibrium between the beta- and alpha-anomers of galactose, therefore ensuring a sufficient supply of the alpha-anomer for GALK1. Also active on D-glucose although shows a preference for galactose over glucose. The protein is Galactose mutarotase (Galm) of Rattus norvegicus (Rat).